A 699-amino-acid chain; its full sequence is Polyribonucleotide nucleotidyltransferase (699 aa).

2 residues coordinate Mg(2+): aspartate 493 and aspartate 499. One can recognise a KH domain in the interval 560–620 (PLIANIEIDP…NKVNQAIEYI (61 aa)). The region spanning 630-697 (GDMFEGKITR…DSGRIQLGKA (68 aa)) is the S1 motif domain.

The protein belongs to the polyribonucleotide nucleotidyltransferase family. Mg(2+) serves as cofactor.

It localises to the cytoplasm. The catalysed reaction is RNA(n+1) + phosphate = RNA(n) + a ribonucleoside 5'-diphosphate. Functionally, involved in mRNA degradation. Catalyzes the phosphorolysis of single-stranded polyribonucleotides processively in the 3'- to 5'-direction. The protein is Polyribonucleotide nucleotidyltransferase of Thermosipho melanesiensis (strain DSM 12029 / CIP 104789 / BI429).